The primary structure comprises 926 residues: Isoleucine--tRNA ligase (926 aa).

Residues 1–21 (MKMKETLQLGKTAFPMRGNLP) form a disordered region. The short motif at 57–67 (PYANGNIHLGH) is the 'HIGH' region element. Glu-552 is an L-isoleucyl-5'-AMP binding site. Residues 593 to 597 (KMSKS) carry the 'KMSKS' region motif. Position 596 (Lys-596) interacts with ATP. Zn(2+) contacts are provided by Cys-886, Cys-889, Cys-906, and Cys-909.

The protein belongs to the class-I aminoacyl-tRNA synthetase family. IleS type 1 subfamily. As to quaternary structure, monomer. The cofactor is Zn(2+).

It is found in the cytoplasm. It catalyses the reaction tRNA(Ile) + L-isoleucine + ATP = L-isoleucyl-tRNA(Ile) + AMP + diphosphate. In terms of biological role, catalyzes the attachment of isoleucine to tRNA(Ile). As IleRS can inadvertently accommodate and process structurally similar amino acids such as valine, to avoid such errors it has two additional distinct tRNA(Ile)-dependent editing activities. One activity is designated as 'pretransfer' editing and involves the hydrolysis of activated Val-AMP. The other activity is designated 'posttransfer' editing and involves deacylation of mischarged Val-tRNA(Ile). The polypeptide is Isoleucine--tRNA ligase (Enterococcus faecalis (strain ATCC 700802 / V583)).